Reading from the N-terminus, the 182-residue chain is Adenine phosphoribosyltransferase (182 aa).

It belongs to the purine/pyrimidine phosphoribosyltransferase family. As to quaternary structure, homodimer.

It localises to the cytoplasm. It catalyses the reaction AMP + diphosphate = 5-phospho-alpha-D-ribose 1-diphosphate + adenine. The protein operates within purine metabolism; AMP biosynthesis via salvage pathway; AMP from adenine: step 1/1. Catalyzes a salvage reaction resulting in the formation of AMP, that is energically less costly than de novo synthesis. In Campylobacter concisus (strain 13826), this protein is Adenine phosphoribosyltransferase.